The chain runs to 533 residues: Calcium/calmodulin-dependent protein kinase type II (533 aa).

ATP-binding positions include 18-26 (LGKGAFSVV) and Lys-41. The active-site Proton acceptor is Asp-134. At Thr-284 the chain carries Phosphothreonine; by autocatalysis. Polar residues-rich tracts occupy residues 316-345 (TSDSTGSVASNGSTTHDTSQIAGTSSQPTS) and 377-391 (PPSTIKESSESSQTI). 2 disordered regions span residues 316–347 (TSDSTGSVASNGSTTHDTSQIAGTSSQPTSPA) and 369–400 (LLNKKEQGPPSTIKESSESSQTIDDNDSEKAQ).

It belongs to the protein kinase superfamily. CAMK Ser/Thr protein kinase family. CaMK subfamily. In terms of assembly, dodecamer. Subunits are tightly packed around a central ring-shaped scaffold with extensive contacts between the regulatory segment of one kinase and the catalytic domain of another enabling cooperative activation of a subunit by the adjacent molecule. Interacts with and phosphorylates daf-16; the interaction promotes daf-16 nuclear localization. Interacts with egl-2 and tir-1. Interacts with nsy-1. Mg(2+) is required as a cofactor.

The protein resides in the cytoplasm. The protein localises to the cell projection. It is found in the axon. It localises to the perikaryon. It carries out the reaction L-seryl-[protein] + ATP = O-phospho-L-seryl-[protein] + ADP + H(+). It catalyses the reaction L-threonyl-[protein] + ATP = O-phospho-L-threonyl-[protein] + ADP + H(+). With respect to regulation, ca(2+)/calmodulin binding removes an autoinhibitory regulatory segment located C-terminal to the kinase domain. This releases the catalytic activity of the enzyme and makes accessible a regulatory residue Thr-284. Phosphorylation of Thr-284 by another kinase domain within the oligomeric holoenzyme keeps CaMKII active in the absence of Ca(2+)/calmodulin by preventing the rebinding of the regulatory segment to the kinase domain and by increasing the affinity of calmodulin for the enzyme. Can respond to high-frequency Ca(2+) pulses to become Ca(2+) independent. In terms of biological role, role in locomotion and neuronal cell fate specification. Required for the regulation of synaptic density, egg laying, defecation, and meiotic maturation. Required for viability under chronic osmotic stress in which it acts downstream of osr-1. Regulates the synaptic trafficking of glr-1. Bidirectional modulator of neurotransmitter release with negative modulatory effects mainly mediated via slo-1 activation. May suppress the functional response to an internal pacemaker, perhaps by modulating the activity of the IP3 receptor. This chain is Calcium/calmodulin-dependent protein kinase type II, found in Caenorhabditis briggsae.